A 350-amino-acid polypeptide reads, in one-letter code: Ribosomal RNA large subunit methyltransferase M (350 aa).

S-adenosyl-L-methionine is bound by residues 217-220, aspartate 236, aspartate 256, and aspartate 272; that span reads APGG. Residue lysine 301 is the Proton acceptor of the active site.

The protein belongs to the class I-like SAM-binding methyltransferase superfamily. RNA methyltransferase RlmE family. RlmM subfamily. As to quaternary structure, monomer.

Its subcellular location is the cytoplasm. It carries out the reaction cytidine(2498) in 23S rRNA + S-adenosyl-L-methionine = 2'-O-methylcytidine(2498) in 23S rRNA + S-adenosyl-L-homocysteine + H(+). In terms of biological role, catalyzes the 2'-O-methylation at nucleotide C2498 in 23S rRNA. The protein is Ribosomal RNA large subunit methyltransferase M of Teredinibacter turnerae (strain ATCC 39867 / T7901).